Consider the following 296-residue polypeptide: Cbb3-type cytochrome c oxidase subunit CcoP (296 aa).

Topologically, residues 1 to 31 (MAQNYKDELSGVETTGHEWDGLRELNNPLPK) are cytoplasmic. Residues 32–52 (WWLYLFYVCIAWAMVYYVFYP) traverse the membrane as a helical segment. The Periplasmic segment spans residues 53 to 296 (AWPLGKTYTK…VYVHNLGGGK (244 aa)). Cytochrome c domains lie at 108–200 (FAMA…LSLN) and 207–293 (GKVA…HNLG). Heme c is bound by residues Cys121, Cys124, His125, Met175, Cys220, Cys223, His224, and Met270.

Belongs to the CcoP / FixP family. Component of the cbb3-type cytochrome c oxidase at least composed of CcoN, CcoO, CcoQ and CcoP. Heme c serves as cofactor.

The protein resides in the cell inner membrane. The protein operates within energy metabolism; oxidative phosphorylation. Functionally, C-type cytochrome. Part of the cbb3-type cytochrome c oxidase complex. CcoP subunit is required for transferring electrons from donor cytochrome c via its heme groups to CcoO subunit. From there, electrons are shuttled to the catalytic binuclear center of CcoN subunit where oxygen reduction takes place. The complex also functions as a proton pump. This Azospirillum sp. (strain B510) protein is Cbb3-type cytochrome c oxidase subunit CcoP.